A 1930-amino-acid chain; its full sequence is Myosin-16 (1930 aa).

The 50-residue stretch at 35–84 (DIKKSCWVKDEKEGFIAGEIQSEQGDQVTVKTVNNQTVTVKKDDVQQMNP) folds into the Myosin N-terminal SH3-like domain. One can recognise a Myosin motor domain in the interval 88 to 774 (YQASDMADMT…ILAKLEDMRD (687 aa)). Residue 181–188 (GESGAGKT) participates in ATP binding. Actin-binding stretches follow at residues 652-674 (LNKL…VPNE) and 753-767 (KIGH…GILA). Residues 777-806 (LAKIMTMLQCRLRGFLMRIEFKKMLERRIG) form the IQ domain. The stretch at 835–1921 (LLNVARQEEE…ALNKLRTRHR (1087 aa)) forms a coiled coil. Residues 1116–1137 (EELEAERSMRAKVEKQRSDLSR) form a disordered region. Residues 1120–1137 (AERSMRAKVEKQRSDLSR) show a composition bias toward basic and acidic residues.

The protein belongs to the TRAFAC class myosin-kinesin ATPase superfamily. Myosin family.

The protein localises to the cytoplasm. It is found in the myofibril. Functionally, may play a role in masticatory muscles contraction. The sequence is that of Myosin-16 from Canis lupus familiaris (Dog).